Consider the following 29-residue polypeptide: Cytochrome b6-f complex subunit 8 (29 aa).

The chain crosses the membrane as a helical span at residues 3-23; the sequence is IVNIAWAALMVVSTFSLTLVV.

This sequence belongs to the PetN family. As to quaternary structure, the 4 large subunits of the cytochrome b6-f complex are cytochrome b6, subunit IV (17 kDa polypeptide, PetD), cytochrome f and the Rieske protein, while the 4 small subunits are PetG, PetL, PetM and PetN. The complex functions as a dimer.

It is found in the plastid. The protein resides in the chloroplast thylakoid membrane. Its function is as follows. Component of the cytochrome b6-f complex, which mediates electron transfer between photosystem II (PSII) and photosystem I (PSI), cyclic electron flow around PSI, and state transitions. This Huperzia lucidula (Shining clubmoss) protein is Cytochrome b6-f complex subunit 8.